We begin with the raw amino-acid sequence, 444 residues long: Enolase (444 aa).

Positions 163 and 172 each coordinate substrate. The active-site Proton donor is Glu-215. Positions 250, 300, and 327 each coordinate Mg(2+). Residues Glu-300 and Asp-327 each coordinate substrate. Lys-352 serves as the catalytic Proton acceptor. Residues 379 to 382 (SHRS) and Lys-403 each bind substrate.

Belongs to the enolase family. As to quaternary structure, homodimer. Requires Mg(2+) as cofactor.

The protein localises to the cytoplasm. The enzyme catalyses (2R)-2-phosphoglycerate = phosphoenolpyruvate + H2O. It participates in carbohydrate degradation; glycolysis; pyruvate from D-glyceraldehyde 3-phosphate: step 4/5. This Mesembryanthemum crystallinum (Common ice plant) protein is Enolase (PGH1).